The following is an 889-amino-acid chain: Alanine--tRNA ligase (889 aa).

Zn(2+)-binding residues include His574, His578, Cys676, and His680.

The protein belongs to the class-II aminoacyl-tRNA synthetase family. It depends on Zn(2+) as a cofactor.

The protein localises to the cytoplasm. It catalyses the reaction tRNA(Ala) + L-alanine + ATP = L-alanyl-tRNA(Ala) + AMP + diphosphate. Its function is as follows. Catalyzes the attachment of alanine to tRNA(Ala) in a two-step reaction: alanine is first activated by ATP to form Ala-AMP and then transferred to the acceptor end of tRNA(Ala). Also edits incorrectly charged Ser-tRNA(Ala) and Gly-tRNA(Ala) via its editing domain. This is Alanine--tRNA ligase from Thermobifida fusca (strain YX).